The primary structure comprises 186 residues: Ribosome-recycling factor (186 aa).

This sequence belongs to the RRF family.

Its subcellular location is the cytoplasm. Responsible for the release of ribosomes from messenger RNA at the termination of protein biosynthesis. May increase the efficiency of translation by recycling ribosomes from one round of translation to another. This is Ribosome-recycling factor from Cupriavidus taiwanensis (strain DSM 17343 / BCRC 17206 / CCUG 44338 / CIP 107171 / LMG 19424 / R1) (Ralstonia taiwanensis (strain LMG 19424)).